The following is a 185-amino-acid chain: UPF0397 protein AYWB_013 (185 aa).

5 helical membrane passes run 13–33 (IGLS…PVGF), 42–62 (AFLA…VGLI), 69–89 (FFLF…IGFI), 109–129 (IVYF…FFAP), and 148–168 (FLIV…LMTI).

The protein belongs to the UPF0397 family.

The protein localises to the cell membrane. This is UPF0397 protein AYWB_013 from Aster yellows witches'-broom phytoplasma (strain AYWB).